The following is a 363-amino-acid chain: Crh-like protein 3 (363 aa).

An N-terminal signal peptide occupies residues 1-19 (MSLLYLVALFVASICSVTA). Residues C25 and C32 are joined by a disulfide bond. The 212-residue stretch at 26 to 237 (NPLTTTCPPD…YSKAPFTMVL (212 aa)) folds into the GH16 domain. N-linked (GlcNAc...) asparagine glycosylation is found at N41, N47, and N56. Catalysis depends on E118, which acts as the Nucleophile. The Proton donor role is filled by E122. Residue E122 participates in chitin binding. Residues N127, N141, and N161 are each glycosylated (N-linked (GlcNAc...) asparagine). Chitin contacts are provided by R203, W207, and T218. 2 N-linked (GlcNAc...) asparagine glycosylation sites follow: N252 and N269. A helical transmembrane segment spans residues 298–318 (VYIGAGCVGAALLAGFIFFFI).

The protein belongs to the glycosyl hydrolase 16 family. CRH1 subfamily. Post-translationally, the GPI-like anchor contains a phosphoceramide lipid group. The anchor position has not been determined.

The protein resides in the cell membrane. It localises to the secreted. It is found in the cell wall. It carries out the reaction Random endo-hydrolysis of N-acetyl-beta-D-glucosaminide (1-&gt;4)-beta-linkages in chitin and chitodextrins.. Functionally, dual chitinase/transglycosylase that plays a role in cell wall architecture. Chitinase and transglycosylase activities are coupled. Required for the polysaccharide cross-linking at the septa and the cell wall. More specifically, transfers chitin to 1,6-beta-glucan in the cell wall. In Aspergillus fumigatus (strain ATCC MYA-4609 / CBS 101355 / FGSC A1100 / Af293) (Neosartorya fumigata), this protein is Crh-like protein 3.